The primary structure comprises 343 residues: Outer envelope pore protein 37, chloroplastic (343 aa).

Polar residues-rich tracts occupy residues 1-11 (MADPSSQNPNL) and 23-43 (THQI…PCST). The segment at 1-43 (MADPSSQNPNLATPPPPSSPSPTHQIQSGTSELSPPSRPPCST) is disordered. Residues 1-73 (MADPSSQNPN…DSLLFLNKVS (73 aa)) constitute a chloroplast transit peptide. The Cytoplasmic portion of the chain corresponds to 74–76 (CKL). Residues 77–86 (FDNLAKLKLS) traverse the membrane as a beta stranded segment. Over 87–103 (FQNNSQREISQPQVSFT) the chain is Chloroplast intermembrane. A beta stranded transmembrane segment spans residues 104–113 (SKHVSVLYDV). Residues 114-129 (EEKNTFIKSTLDVHPR) lie on the Cytoplasmic side of the membrane. A beta stranded membrane pass occupies residues 130–137 (LQLRALHN). Residues 138–154 (VKAQQGEVAMEANLTEP) lie on the Chloroplast intermembrane side of the membrane. A beta stranded membrane pass occupies residues 155–164 (GYSLELSSPV). Topologically, residues 165 to 169 (PIGYP) are cytoplasmic. A beta stranded membrane pass occupies residues 170–178 (RATLKFPLG). Over 179–219 (EISLQEKDEEEEEKQKRTLSVNGILKRQVMNGVCTALYTDE) the chain is Chloroplast intermembrane. A beta stranded transmembrane segment spans residues 220 to 228 (ELRLRYAYK). The Cytoplasmic segment spans residues 229-230 (DD). The chain crosses the membrane as a beta stranded span at residues 231–240 (ALSFIPSISL). Position 241 (proline 241) is a topological domain, chloroplast intermembrane. A beta stranded membrane pass occupies residues 242-250 (SNAASFAFK). Residues 251–257 (RRFSPSD) are Cytoplasmic-facing. Residues 258–267 (KLSYWYNFDS) traverse the membrane as a beta stranded segment. At 268-269 (NM) the chain is on the chloroplast intermembrane side. Residues 270-279 (WSAVYKRTYG) traverse the membrane as a beta stranded segment. The Cytoplasmic portion of the chain corresponds to 280–286 (KDYKLKA). A beta stranded transmembrane segment spans residues 287–296 (GYDSDVRLGW). The Chloroplast intermembrane portion of the chain corresponds to 297 to 316 (ASLWVGDEAGKVKTTPMKMK). Residues 317-326 (VQFMLQVPQD) traverse the membrane as a beta stranded segment. The Cytoplasmic segment spans residues 327–343 (DIKSSVLMFRVKKRWDI).

This sequence belongs to the plastid outer envelope porin OEP37 (TC 1.B.47) family. In terms of assembly, forms an hourglass-shaped multimeric complex. In terms of tissue distribution, ubiquitously expressed at low levels. Mostly present in cotyledons, and accumulates in seedlings and embryos.

It localises to the plastid. It is found in the chloroplast outer membrane. In terms of biological role, voltage-dependent peptide-sensitive high conductance rectifying cation channel with a strong affinity for TIC32 that is imported into the chloroplast. Conductance is pH-dependent decreasing with decreasing pH values. The polypeptide is Outer envelope pore protein 37, chloroplastic (OEP37) (Arabidopsis thaliana (Mouse-ear cress)).